A 266-amino-acid polypeptide reads, in one-letter code: Integral membrane protein 2B (266 aa).

The Cytoplasmic portion of the chain corresponds to 1–54 (MVKVTFNSALAQKEAKKDEPKSSEEALIVPPDAVAVDCKDPGDVVPVGQRRAWC). Residues 55–75 (WCMCFGLAFMLAGVILGGAYL) traverse the membrane as a helical; Signal-anchor for type II membrane protein segment. Topologically, residues 76–266 (YKYFALQPDD…KFAVETLICS (191 aa)) are lumenal. The tract at residues 102–134 (EPSADAPAARYQTIEENIKIFEEDAVEFISVPV) is necessary for interaction with APP and inhibitor effects on APP processing. One can recognise a BRICHOS domain in the interval 137 to 231 (FADSDPANIV…LCHDKETYKL (95 aa)). Intrachain disulfides connect cysteine 164–cysteine 223 and cysteine 248–cysteine 265. N-linked (GlcNAc...) asparagine glycosylation is present at asparagine 170.

This sequence belongs to the ITM2 family. In terms of assembly, homodimer; disulfide-linked. Interacts with SPPL2A and SPPL2B. Interacts with APP. Mature BRI2 (mBRI2) interacts with the APP amyloid-beta A4 protein; the interaction occurs at the cell surface and in the endocytic compartments and enable alpha- and beta-secretase-induced APP cleavage inhibition. Mature BRI2 (mBRI2) interacts with the APP C99; the interaction occurs in the endocytic compartments and enable gamma-secretase-induced C99 cleavage inhibition. May form heterodimers with Bri23 peptide and APP amyloid-beta protein 40. Interacts with ADAM7 in sperm; the interaction increases following capacitation. Post-translationally, the ectodomain C-terminal part of the imBRI2 is processed by furin producing a secreted Bri23 peptide and a mature BRI2, membrane form (mBRI2). The remaining part of the ectodomain of mBRI2 containing the BRICHOS domain is cleaved by ADAM10 and is secreted (BRI2C, soluble form). The membrane-bound N-terminal fragment (BRI2C, membrane form) is further proteolytically processed by SPPL2A and SPPL2B through regulated intramembrane proteolysis producing a secreted C-peptide and a BRI2 intracellular domain (BRI2 ICD) released in the cytosol. Shedding by ADAM10 facilitates intramembrane cleavage but is not absolutely required for BRI2 ICD generation. Glycosylation at Asn-170 is important for cell surface localization, but doesn't affect furin- and ADAM10-induced proteolytic processing. As to expression, expressed in the brain, testis, testicular sperm, epididymis and mature epididymal sperm (at protein level).

It is found in the golgi apparatus membrane. Its subcellular location is the cell membrane. It localises to the endosome membrane. The protein resides in the secreted. Its function is as follows. Plays a regulatory role in the processing of the amyloid-beta A4 precursor protein (APP) and acts as an inhibitor of the amyloid-beta peptide aggregation and fibrils deposition. Plays a role in the induction of neurite outgrowth. Functions as a protease inhibitor by blocking access of secretases to APP cleavage sites. Functionally, mature BRI2 (mBRI2) functions as a modulator of the amyloid-beta A4 precursor protein (APP) processing leading to a strong reduction in the secretion of secretase-processed amyloid-beta protein 40 and amyloid-beta protein 42. Bri23 peptide prevents aggregation of APP amyloid-beta protein 42 into toxic oligomers. The chain is Integral membrane protein 2B (Itm2b) from Mus musculus (Mouse).